We begin with the raw amino-acid sequence, 382 residues long: Pyrimidine monooxygenase RutA (382 aa).

Residues 68–69 (IK), asparagine 134, glutamate 143, 159–160 (RY), and serine 209 each bind FMN.

The protein belongs to the NtaA/SnaA/DszA monooxygenase family. RutA subfamily.

The catalysed reaction is uracil + FMNH2 + NADH + O2 = (Z)-3-ureidoacrylate + FMN + NAD(+) + H2O + H(+). The enzyme catalyses thymine + FMNH2 + NADH + O2 = (Z)-2-methylureidoacrylate + FMN + NAD(+) + H2O + H(+). In terms of biological role, catalyzes the pyrimidine ring opening between N-3 and C-4 by an unusual flavin hydroperoxide-catalyzed mechanism, adding oxygen atoms in the process to yield ureidoacrylate peracid, that immediately reacts with FMN forming ureidoacrylate and FMN-N(5)-oxide. The FMN-N(5)-oxide reacts spontaneously with NADH to produce FMN. Requires the flavin reductase RutF to regenerate FMN in vivo. This is Pyrimidine monooxygenase RutA from Escherichia coli O81 (strain ED1a).